The following is a 330-amino-acid chain: D-cysteine desulfhydrase (330 aa).

Position 52 is an N6-(pyridoxal phosphate)lysine (Lys-52).

The protein belongs to the ACC deaminase/D-cysteine desulfhydrase family. As to quaternary structure, homodimer. Requires pyridoxal 5'-phosphate as cofactor.

It carries out the reaction D-cysteine + H2O = hydrogen sulfide + pyruvate + NH4(+) + H(+). Functionally, catalyzes the alpha,beta-elimination reaction of D-cysteine and of several D-cysteine derivatives. It could be a defense mechanism against D-cysteine. The protein is D-cysteine desulfhydrase of Yersinia enterocolitica serotype O:8 / biotype 1B (strain NCTC 13174 / 8081).